Reading from the N-terminus, the 85-residue chain is Beta-insect depressant toxin LqhIT2 (85 aa).

An N-terminal signal peptide occupies residues 1–21; it reads MKLLLLLIVSASMLIESLVNA. The LCN-type CS-alpha/beta domain maps to 22–82; that stretch reads DGYIKRRDGC…TWKSETNTCG (61 aa). 4 cysteine pairs are disulfide-bonded: cysteine 31–cysteine 81, cysteine 35–cysteine 56, cysteine 42–cysteine 63, and cysteine 46–cysteine 65. Position 82 is a glycine amide (glycine 82).

Belongs to the long (4 C-C) scorpion toxin superfamily. Sodium channel inhibitor family. Beta subfamily. Expressed by the venom gland.

The protein resides in the secreted. In terms of biological role, depressant insect beta-toxins cause a transient contraction paralysis followed by a slow flaccid paralysis. They bind voltage-independently at site-4 of sodium channels (Nav) and shift the voltage of activation toward more negative potentials thereby affecting sodium channel activation and promoting spontaneous and repetitive firing. This toxin is active only on insects. This is Beta-insect depressant toxin LqhIT2 from Leiurus hebraeus (Hebrew deathstalker scorpion).